We begin with the raw amino-acid sequence, 196 residues long: MSDENPLQPPWLNAPPVDPYPYEESHDLRTGPKLHPALDGLLPYVGVWRGRGRGGYPTIEDFDYGQEIRISHDGRPFLCYESRAWLLDEQSRPIRPAGREMGWWRPVLAGDRATGEWEALMTTPTGVMELHLGKRTGTQLEFATDAVVRTPTAKEVTAGHRLFGIVEGALLYAQEMAAVGHGLTPHLSARLIRVGG.

A disordered region spans residues 1–29 (MSDENPLQPPWLNAPPVDPYPYEESHDLR). The segment covering 7-19 (LQPPWLNAPPVDP) has biased composition (pro residues). The short motif at 46 to 52 (GVWRGRG) is the GXWXGXG element. H186 lines the heme b pocket.

This sequence belongs to the nitrobindin family. As to quaternary structure, homodimer. Requires heme b as cofactor.

The catalysed reaction is peroxynitrite = nitrate. It functions in the pathway nitrogen metabolism. Its function is as follows. Heme-binding protein able to scavenge peroxynitrite and to protect free L-tyrosine against peroxynitrite-mediated nitration, by acting as a peroxynitrite isomerase that converts peroxynitrite to nitrate. Therefore, this protein likely plays a role in peroxynitrite sensing and in the detoxification of reactive nitrogen and oxygen species (RNS and ROS, respectively). Is able to bind nitric oxide (NO) in vitro, but may act as a sensor of peroxynitrite levels in vivo. In Salinispora arenicola (strain CNS-205), this protein is Peroxynitrite isomerase.